Reading from the N-terminus, the 354-residue chain is Cysteine and histidine-rich domain-containing protein morgana (354 aa).

Zn(2+)-binding residues include C4, C9, C23, H26, C41, C42, C58, H63, C140, C145, C159, H162, C177, C178, C194, and H199. 2 consecutive CHORD domains span residues 4–63 (CYNR…LAKH) and 140–199 (CKNN…YGEH). Residues 210 to 301 (VVQCRYDWHQ…LEPGSWSNLN (92 aa)) form the CS domain. Phosphoserine is present on residues S324 and S339.

Interacts with Hsp83.

The protein localises to the cytoplasm. It is found in the nucleus. It localises to the cytoskeleton. The protein resides in the spindle. Its function is as follows. Regulates centrosome duplication and mitotic spindle dynamics. Also involved in controlling the size of dendritic arbors. May act as co-chaperone for Hsp83. During mitotic spindle assembly, regulates microtubule (MT) dynamics by binding to MTs and promoting MT polymerisation. Promotes the elongation and retraction of terminal branches in response to changes in body size, possibly acting downstream of the TORC2 pathway to enable proportional scaling of dendritic arbors. The sequence is that of Cysteine and histidine-rich domain-containing protein morgana from Drosophila melanogaster (Fruit fly).